Here is a 244-residue protein sequence, read N- to C-terminus: Small ribosomal subunit protein uS3 (244 aa).

A KH type-2 domain is found at 38-106; the sequence is IRKYLNARLA…DIQINIFEVK (69 aa). The tract at residues 217-244 is disordered; the sequence is TQSKESGRGNNGGNNGGGKNFKRKKNNR. Residues 225–235 show a composition bias toward gly residues; sequence GNNGGNNGGGK.

This sequence belongs to the universal ribosomal protein uS3 family. In terms of assembly, part of the 30S ribosomal subunit. Forms a tight complex with proteins S10 and S14.

Binds the lower part of the 30S subunit head. Binds mRNA in the 70S ribosome, positioning it for translation. This Bacteroides fragilis (strain ATCC 25285 / DSM 2151 / CCUG 4856 / JCM 11019 / LMG 10263 / NCTC 9343 / Onslow / VPI 2553 / EN-2) protein is Small ribosomal subunit protein uS3.